A 266-amino-acid chain; its full sequence is MSEHSFVWDAVQRVRTGAPLVHNITNYVVMNTTANALLAAGASPVMAHAREEVEELAGLCSSLVLNIGTLSKPWIESMFAAGRIAQSRGVPVVLDPVGAGASSLRTWTSLDLLRELNISVLRGNASEILALSGAGSRTKGVDSIHQAADAADAARELAGKFGCVVVVSGAEDLITDGSSDVLVRGGHDMMPRITGMGCTATALVAAHAAVAGSVLDGAAAGMGVMAVAGTMASRKAKGPGSFQMHFIDALYGMQSFDVEAGVEIVR.

Methionine 46 is a binding site for substrate. Arginine 122 and serine 168 together coordinate ATP. Glycine 195 provides a ligand contact to substrate.

This sequence belongs to the Thz kinase family. Mg(2+) is required as a cofactor.

The enzyme catalyses 5-(2-hydroxyethyl)-4-methylthiazole + ATP = 4-methyl-5-(2-phosphooxyethyl)-thiazole + ADP + H(+). It participates in cofactor biosynthesis; thiamine diphosphate biosynthesis; 4-methyl-5-(2-phosphoethyl)-thiazole from 5-(2-hydroxyethyl)-4-methylthiazole: step 1/1. Its function is as follows. Catalyzes the phosphorylation of the hydroxyl group of 4-methyl-5-beta-hydroxyethylthiazole (THZ). In Oleidesulfovibrio alaskensis (strain ATCC BAA-1058 / DSM 17464 / G20) (Desulfovibrio alaskensis), this protein is Hydroxyethylthiazole kinase.